The following is a 62-amino-acid chain: Conotoxin Qc5.2 (62 aa).

The first 22 residues, 1–22 (MRCVPVFIILLLLSPSAPSVDA), serve as a signal peptide directing secretion. The propeptide occupies 23–48 (HPMTKDDVPQASLHDDAKRTLQVPWM). Val-60 is modified (valine amide).

Belongs to the conotoxin T superfamily. In terms of processing, contains 2 disulfide bonds that can be either 'C1-C3, C2-C4' or 'C1-C4, C2-C3', since these disulfide connectivities have been observed for conotoxins with cysteine framework V (for examples, see AC P0DQQ7 and AC P81755). In terms of tissue distribution, expressed by the venom duct.

The protein localises to the secreted. The chain is Conotoxin Qc5.2 from Conus quercinus (Oak cone).